Reading from the N-terminus, the 996-residue chain is Disabled homolog 2-interacting protein (996 aa).

In terms of domain architecture, C2 spans 1–118; sequence MENLRRAVHP…AGRQFVEKWY (118 aa). The 209-residue stretch at 194–402 folds into the Ras-GAP domain; sequence GKVKDFLTDL…TNMQRFLLEI (209 aa). Residues 453–750 are necessary for interaction with AKT1; sequence LRDVHTALST…RTPPTMLSTL (298 aa). The segment covering 460 to 475 has biased composition (polar residues); that stretch reads LSTPGSGQLPGTNDLA. Disordered stretches follow at residues 460–486 and 522–545; these read LSTP…SSVS and RSSG…PDLQ. Over residues 476 to 486 the composition is skewed to low complexity; the sequence is STPGSGSSSVS. A compositionally biased stretch (polar residues) spans 522-538; it reads RSSGVQPSPARSSSYSE. Ser-535 carries the post-translational modification Phosphoserine; by MAP3K5 and RIPK1. Phosphoserine is present on Ser-554. Disordered regions lie at residues 611–630, 650–672, 702–805, 822–841, and 971–996; these read VPTP…PQLL, PRGL…NSEE, SLTE…SPNA, EDEG…SKEE, and RNGV…SSNC. Low complexity predominate over residues 659–672; the sequence is EGHSSLSSHSNSEE. Residues 726–738 show a composition bias toward pro residues; that stretch reads QPPPPPPPPPPAP. Polar residues-rich tracts occupy residues 746–762 and 774–783; these read MLST…TLAS and LRQQSSSSKG. Residues Ser-785 and Ser-802 each carry the phosphoserine modification. Basic and acidic residues predominate over residues 830-841; it reads PPHRDRLRSKEE. The stretch at 832–966 forms a coiled coil; it reads HRDRLRSKEE…SALTQLKERY (135 aa). A compositionally biased stretch (polar residues) spans 974-996; that stretch reads VSPTNPTKLQITENGEFRNSSNC.

As to quaternary structure, on plasma membrane, exists in an inactive form complexed with TNFR1; in response to TNF-alpha, dissociates from TNFR1 complex, translocates to cytoplasm and forms part of an intracellular signaling complex comprising TRADD, RIPK1, TRAF2 and MAP3K5. Interacts (via NPXY motif) with DAB2 (via PID domain). Interacts (via PH domain) with ERN1. Part of a cytoplasmic complex made of HIPK1, DAB2IP and MAP3K5 in response to TNF-alpha; this complex formation promotes MAP3K5-JNK activation and subsequent apoptosis. Interacts (via N-terminal domain) with JAK2; the interaction occurs in a IFNG/IFN-gamma-dependent manner and inhibits JAK2 autophosphorylation activity. Interacts (via C2 domain) with GSK3B; the interaction stimulates GSK3B kinase activation. Interacts (via C2 domain) with PPP2CA. Interacts (via proline-rich motif) with a regulatory p85 subunit (via SH3 domain) of the PI3K complex; the interaction inhibits the PI3K-AKT complex activity in a TNF-alpha-dependent manner in prostate cancer (PCa) cells. Interacts with AKT1; the interaction is increased in a TNF-alpha-induced manner. Interacts (via C2 domain and active form preferentially) with KDR/VEGFR2 (tyrosine-phosphorylated active form preferentially); the interaction occurs at the late phase of VEGFA response and inhibits KDR/VEGFR2 activity. Interacts (via N-terminus C2 domain) with MAP3K5 ('Ser-966' dephosphorylated form preferentially); the interaction occurs in a TNF-alpha-induced manner. Interacts (via Ras-GAP domain) with the catalytic subunit of protein phosphatase PP2A; the interaction occurs in resting endothelial cells, is further enhanced by TNF-alpha stimulation and is required to bridge PP2A to MAP3K5. Interacts (via C-terminus PER domain) with TRAF2 (via zinc fingers); the interaction occurs in a TNF-alpha-dependent manner. Interacts with 14-3-3 proteins; the interaction occurs in a TNF-alpha-dependent manner. Interacts (via Ras-GAP domain) with RIPK1 (via kinase domain); the interaction occurs in a TNF-alpha-dependent manner. Interacts with DAB1 and DAB2. Interacts with RAB40C; acts as a GAP for RAB40C. In terms of processing, in response to TNF-alpha-induction, phosphorylated at Ser-535; phosphorylation leads to a conformational change, and thus, increases its association with 14-3-3 proteins, MAP3K5, RIPK1 and TRAF2 in endothelial cells; also stimulates regulatory p85 subunit sequestring and PI3K-p85 complex activity inhibition. As to expression, expressed in brain, lung, thymus, bladder and skeletal muscle. Up-regulatedd during prostate degeneration.

The protein resides in the cytoplasm. It is found in the cell membrane. Its subcellular location is the membrane. The protein localises to the cell projection. It localises to the dendrite. In terms of biological role, functions as a scaffold protein implicated in the regulation of a large spectrum of both general and specialized signaling pathways. Involved in several processes such as innate immune response, inflammation and cell growth inhibition, apoptosis, cell survival, angiogenesis, cell migration and maturation. Also plays a role in cell cycle checkpoint control; reduces G1 phase cyclin levels resulting in G0/G1 cell cycle arrest. Mediates signal transduction by receptor-mediated inflammatory signals, such as the tumor necrosis factor (TNF), interferon (IFN) or lipopolysaccharide (LPS). Modulates the balance between phosphatidylinositol 3-kinase (PI3K)-AKT-mediated cell survival and apoptosis stimulated kinase (MAP3K5)-JNK signaling pathways; sequesters both AKT1 and MAP3K5 and counterbalances the activity of each kinase by modulating their phosphorylation status in response to pro-inflammatory stimuli. Acts as a regulator of the endoplasmic reticulum (ER) unfolded protein response (UPR) pathway; specifically involved in transduction of the ER stress-response to the JNK cascade through ERN1. Mediates TNF-alpha-induced apoptosis activation by facilitating dissociation of inhibitor 14-3-3 from MAP3K5; recruits the PP2A phosphatase complex which dephosphorylates MAP3K5 on 'Ser-966', leading to the dissociation of 13-3-3 proteins and activation of the MAP3K5-JNK signaling pathway in endothelial cells. Acts a negative regulator in the IFN-gamma-mediated JAK-STAT signaling cascade by inhibiting smooth muscle cell (VSMCs) proliferation and intimal expansion, and thus, prevents graft arteriosclerosis (GA). Acts as a GTPase-activating protein (GAP) for the ADP ribosylation factor 6 (ARF6). Promotes hydrolysis of the ARF6-bound GTP and thus, negatively regulates phosphatidylinositol 4,5-bisphosphate (PIP2)-dependent TLR4-TIRAP-MyD88 and NF-kappa-B signaling pathways in endothelial cells in response to lipopolysaccharides (LPS). Binds specifically to phosphatidylinositol 4-phosphate (PtdIns4P) and phosphatidylinositol 3-phosphate (PtdIns3P). In response to vascular endothelial growth factor (VEGFA), acts as a negative regulator of the VEGFR2-PI3K-mediated angiogenic signaling pathway by inhibiting endothelial cell migration and tube formation. In the developing brain, promotes both the transition from the multipolar to the bipolar stage and the radial migration of cortical neurons from the ventricular zone toward the superficial layer of the neocortex in a glial-dependent locomotion process. Probable downstream effector of the Reelin signaling pathway; promotes Purkinje cell (PC) dendrites development and formation of cerebellar synapses. Also functions as a tumor suppressor protein in prostate cancer progression; prevents cell proliferation and epithelial-to-mesenchymal transition (EMT) through activation of the glycogen synthase kinase-3 beta (GSK3B)-induced beta-catenin and inhibition of PI3K-AKT and Ras-MAPK survival downstream signaling cascades, respectively. Mediates TNF/TRAF2-induced MAP3K5-JNK activation, while it inhibits CHUK-NF-kappa-B signaling. Functions as a Ras GTPase-activating protein. May act as a tumor suppressor gene. In Rattus norvegicus (Rat), this protein is Disabled homolog 2-interacting protein (Dab2ip).